Consider the following 419-residue polypeptide: uncharacterized protein (419 aa).

This sequence belongs to the MT-A70-like family.

Its subcellular location is the cytoplasm. This is an uncharacterized protein from Schizosaccharomyces pombe (strain 972 / ATCC 24843) (Fission yeast).